The chain runs to 1088 residues: MDEFEKAIIYCFDPNVSEDIKQKALAYTESIKVAPEAWLFCLERLGKTQIVLVKFFCLQVFQEIILHRYETLSKTDRLNLRTGLMNWFRLYLVNNQEESAIKNKYAQVMVLLFKQEYLENWLTFFDDFLSMLSPGNSSIDIFLRICKSIDEEVVSFDVHRSPAELAQNTFIKDTMRENAITKIVASWYEILVHHQSPPLINMTLQNIKTYVGWIDISLIVNDKFIPLFCKYLGVRVVRDEVCDCFKEIINKGMDPFAKLTLIQQLEIKNIINFAQLDDQEFNIRVGALINLTGMEILRSLESIQTLQQEGFDKKFQSGEILLEEMLQLLFRFFNNESNDVSYSVYGLASLYVQKLKNIKVLNEKQIQHITLLVQIVRNKMRYKTSRIEEDDDESDIKFADFRKDLSNLFRNIFRICPEMVGSFIATNIQRIVENKNNNNKNKNTTNSKNGTINNNINKTNNNNNNNTNNINNNTNNINNNTTNNNNNNTNKNNVKNANNIKNNNNEDEEDDDDMSFSDIEVSIYLLFQMGEGISATSEETLKSFEKFFGSMVVVLSQSSISITEHQVVSLIYFETIVRYAKYIPMDEQQYLSSVLKSFLDERGIHNKDALVRSKAGYLLNKLAKYLKVQMFPYINDIIDALKNHLIISYEIQKEVPFEEQLNFYESLGFLIGGANLPIEKEALYIEKILNNPIIKMEEIIAKQLYKGDTKENQFYYTVQLTQLINVIGTFSKGFSSFNATNGQLKPDAYCTYKVYFKRSLESIIQLPSLIPSNEDIKSRTFFYMHRMVDVLGKDLKPLLVKILPILLDHATTIDILLEFLVFYNQLISKYKEELFDVINPTLCPIVDRIYKSLNTTIPPVEHSDAERALNDLKKSYFQLIQALFTHNLASTLTSTLNLPLLFQQVFNTVIGGCQASGSHSESIQKVCFVILKKMIDDYSPGGPHAVNGFQSFIYDQVVPLCFQVPLSDQFNMSDFTSTQILLEIGKSLRAIAQKYGDEFLTYMNTILLPKLNVSQEVINQFIKLLQPSSPIKDFQELLKLFIRQKKGLPIKTSNSNINLNNNNNINNNNNNINNNGHTNGNGVNKNGH.

The segment covering 435–503 (KNNNNKNKNT…VKNANNIKNN (69 aa)) has biased composition (low complexity). 2 disordered regions span residues 435 to 513 (KNNN…DDDD) and 1059 to 1088 (LNNN…KNGH).

It belongs to the exportin family.

It localises to the nucleus. The protein localises to the cytoplasm. In terms of biological role, mediates the nuclear export of aminoacylated tRNAs. The chain is Exportin-T (xpot) from Dictyostelium discoideum (Social amoeba).